Reading from the N-terminus, the 217-residue chain is Ras-related protein Rab-19 (217 aa).

GTP is bound by residues serine 26, valine 28, glycine 29, lysine 30, threonine 31, cysteine 32, tyrosine 42, glutamate 44, and threonine 49. Threonine 31 contacts Mg(2+). Residues 39-54 carry the Switch 1 motif; that stretch reads SGVYMEAQQNTIGVDF. Mg(2+) contacts are provided by threonine 49 and aspartate 72. Positions 74 to 89 match the Switch 2 motif; it reads AGQERFRTITQSYYRS. GTP contacts are provided by glycine 75, asparagine 130, lysine 131, aspartate 133, serine 161, alanine 162, and lysine 163. 2 S-geranylgeranyl cysteine lipidation sites follow: cysteine 215 and cysteine 217. Cysteine 217 is subject to Cysteine methyl ester.

The protein belongs to the small GTPase superfamily. Rab family. Requires Mg(2+) as cofactor.

It is found in the cell membrane. It carries out the reaction GTP + H2O = GDP + phosphate + H(+). With respect to regulation, regulated by guanine nucleotide exchange factors (GEFs) which promote the exchange of bound GDP for free GTP. Regulated by GTPase activating proteins (GAPs) which increase the GTP hydrolysis activity. Inhibited by GDP dissociation inhibitors (GDIs). Its function is as follows. The small GTPases Rab are key regulators of intracellular membrane trafficking, from the formation of transport vesicles to their fusion with membranes. Rabs cycle between an inactive GDP-bound form and an active GTP-bound form that is able to recruit to membranes different set of downstream effectors directly responsible for vesicle formation, movement, tethering and fusion. This is Ras-related protein Rab-19 (RAB19) from Bos taurus (Bovine).